An 888-amino-acid polypeptide reads, in one-letter code: Bifunctional lysine-specific demethylase and histidyl-hydroxylase NO66 (888 aa).

3 disordered regions span residues 83-157 (AAAK…GSFS), 187-208 (SNNS…DSDA), and 261-446 (NSTS…NKLS). Positions 98–108 (REKNIAKKQPE) are enriched in basic and acidic residues. A compositionally biased stretch (polar residues) spans 116–139 (ENVQKQLENGQENNGTLINLSNGK). Acidic residues predominate over residues 192–207 (FDFDSDGDSNDFDDSD). Basic and acidic residues predominate over residues 273-284 (VEPRKAAKRNEP). Over residues 392–403 (KNKNNDNNNIDT) the composition is skewed to low complexity. The segment covering 404–429 (NNKKDANNKKDANNNKDINNKKDANN) has biased composition (basic and acidic residues). Residues 430 to 444 (NKDTNNNKDNNNKNK) show a composition bias toward low complexity. A JmjC domain is found at 564 to 709 (CSIRILNPST…NLLEVLMPSV (146 aa)). Residues H610, D612, and H675 each contribute to the Fe cation site.

The protein belongs to the ROX family. NO66 subfamily. It depends on Fe(2+) as a cofactor.

The protein resides in the nucleus. The enzyme catalyses N(6),N(6)-dimethyl-L-lysyl(36)-[histone H3] + 2 2-oxoglutarate + 2 O2 = L-lysyl(36)-[histone H3] + 2 formaldehyde + 2 succinate + 2 CO2. Functionally, oxygenase that can act as both a histone lysine demethylase and a ribosomal histidine hydroxylase. Specifically demethylates 'Lys-4' (H3K4me) and 'Lys-36' (H3K36me) of histone H3, thereby playing a central role in histone code. The chain is Bifunctional lysine-specific demethylase and histidyl-hydroxylase NO66 from Drosophila mojavensis (Fruit fly).